Reading from the N-terminus, the 231-residue chain is Two-component response regulator ARR3 (231 aa).

The Response regulatory domain occupies 34-161 (HVLAVDDSLV…DVKRLRSYLT (128 aa)). Aspartate 94 is modified (4-aspartylphosphate). The interval 170–231 (GNKRKLTTPP…DSPMRSPGLA (62 aa)) is disordered. The span at 185–199 (SATSSMESSDSTVES) shows a compositional bias: low complexity. The span at 210–221 (LTMSPESATSLV) shows a compositional bias: polar residues.

Belongs to the ARR family. Type-A subfamily. Two-component system major event consists of a His-to-Asp phosphorelay between a sensor histidine kinase (HK) and a response regulator (RR). In plants, the His-to-Asp phosphorelay involves an additional intermediate named Histidine-containing phosphotransfer protein (HPt). This multistep phosphorelay consists of a His-Asp-His-Asp sequential transfer of a phosphate group between first a His and an Asp of the HK protein, followed by the transfer to a conserved His of the HPt protein and finally the transfer to an Asp in the receiver domain of the RR protein. As to expression, predominantly expressed in roots.

It localises to the nucleus. Functions as a response regulator involved in His-to-Asp phosphorelay signal transduction system. Phosphorylation of the Asp residue in the receiver domain activates the ability of the protein to promote the transcription of target genes. Type-A response regulators seem to act as negative regulators of the cytokinin signaling. This is Two-component response regulator ARR3 (ARR3) from Arabidopsis thaliana (Mouse-ear cress).